A 174-amino-acid polypeptide reads, in one-letter code: Protein C (174 aa).

This sequence belongs to the morbillivirus protein C family.

The polypeptide is Protein C (P/V/C) (Canine distemper virus (strain Onderstepoort) (CDV)).